The primary structure comprises 344 residues: Nuclear distribution protein nudE-like 1-B (344 aa).

A coiled-coil region spans residues 26-189 (YKKSCHDAQE…ELAVRERTSD (164 aa)).

The protein belongs to the nudE family. Post-translationally, phosphorylated in mitosis.

Its subcellular location is the cytoplasm. The protein resides in the cytoskeleton. The protein localises to the microtubule organizing center. It is found in the centrosome. It localises to the spindle. Its function is as follows. Required for organization of the cellular microtubule array and microtubule anchoring at the centrosome. Positively regulates the activity of the minus-end directed microtubule motor protein dynein. May enhance dynein-mediated microtubule sliding by targeting dynein to the microtubule plus end. This is Nuclear distribution protein nudE-like 1-B (ndel1b) from Danio rerio (Zebrafish).